Reading from the N-terminus, the 608-residue chain is Granule-bound starch synthase 1, chloroplastic/amyloplastic (608 aa).

Residues 1–76 (MATITASHFV…EGGMAAGTIV (76 aa)) constitute a chloroplast transit peptide. Lys96 provides a ligand contact to ADP-alpha-D-glucose.

The protein belongs to the glycosyltransferase 1 family. Bacterial/plant glycogen synthase subfamily.

It is found in the plastid. Its subcellular location is the chloroplast. The protein resides in the amyloplast. The catalysed reaction is an NDP-alpha-D-glucose + [(1-&gt;4)-alpha-D-glucosyl](n) = [(1-&gt;4)-alpha-D-glucosyl](n+1) + a ribonucleoside 5'-diphosphate + H(+). Its pathway is glycan biosynthesis; starch biosynthesis. Functionally, required for the synthesis of amylose. The protein is Granule-bound starch synthase 1, chloroplastic/amyloplastic (WAXY) of Ipomoea batatas (Sweet potato).